The following is a 352-amino-acid chain: Ion-translocating oxidoreductase complex subunit D (352 aa).

4 consecutive transmembrane segments (helical) span residues isoleucine 20 to glycine 40, glycine 42 to leucine 62, isoleucine 89 to alanine 109, and proline 123 to leucine 143. Threonine 187 is subject to FMN phosphoryl threonine. 5 helical membrane passes run isoleucine 214–leucine 234, tryptophan 242–phenylalanine 262, leucine 267–leucine 287, leucine 301–proline 321, and aspartate 322–threonine 342.

Belongs to the NqrB/RnfD family. As to quaternary structure, the complex is composed of six subunits: RsxA, RsxB, RsxC, RsxD, RsxE and RsxG. It depends on FMN as a cofactor.

Its subcellular location is the cell inner membrane. Functionally, part of a membrane-bound complex that couples electron transfer with translocation of ions across the membrane. Required to maintain the reduced state of SoxR. This is Ion-translocating oxidoreductase complex subunit D from Escherichia coli O81 (strain ED1a).